A 383-amino-acid polypeptide reads, in one-letter code: Cytochrome b (383 aa).

The next 4 membrane-spanning stretches (helical) occupy residues 30–50, 74–96, 109–129, and 175–195; these read FGSLLGLCLGIQILTGVLLAM, WILRYVHANGASLFFICVYCHIG, TWIVGVLIYFIMMLTAFIGYV, and FFSLHYLLPFVLVGLVLAHLL. Heme b-binding residues include H80 and H94. 2 residues coordinate heme b: H179 and H193. Residue H198 coordinates a ubiquinone. Transmembrane regions (helical) follow at residues 221–241, 289–309, 320–340, and 345–365; these read FTIKDILGFLILLGVFVIIGI, GVLALFASILVLLLMPILDRS, AKFFFWFIVGDFFILTWIGSA, and EPYVLIGRIATIFYFGYFLVL.

Belongs to the cytochrome b family. As to quaternary structure, the main subunits of complex b-c1 are: cytochrome b, cytochrome c1 and the Rieske protein. Requires heme b as cofactor.

The protein resides in the mitochondrion inner membrane. Component of the ubiquinol-cytochrome c reductase complex (complex III or cytochrome b-c1 complex) that is part of the mitochondrial respiratory chain. The b-c1 complex mediates electron transfer from ubiquinol to cytochrome c. Contributes to the generation of a proton gradient across the mitochondrial membrane that is then used for ATP synthesis. The polypeptide is Cytochrome b (mt:Cyt-b) (Trichoplax adhaerens (Trichoplax reptans)).